Here is a 230-residue protein sequence, read N- to C-terminus: Cytidylate kinase (230 aa).

An ATP-binding site is contributed by 12-20; sequence GPSGAGKGT.

The protein belongs to the cytidylate kinase family. Type 1 subfamily.

The protein resides in the cytoplasm. The catalysed reaction is CMP + ATP = CDP + ADP. The enzyme catalyses dCMP + ATP = dCDP + ADP. This Shewanella pealeana (strain ATCC 700345 / ANG-SQ1) protein is Cytidylate kinase.